The primary structure comprises 431 residues: 3-phosphoshikimate 1-carboxyvinyltransferase (431 aa).

3 residues coordinate 3-phosphoshikimate: Lys-26, Ser-27, and Arg-31. Residue Lys-26 coordinates phosphoenolpyruvate. Gly-99 and Arg-127 together coordinate phosphoenolpyruvate. Ser-170, Ser-171, Gln-172, Ser-199, Glu-314, and His-343 together coordinate 3-phosphoshikimate. Gln-172 lines the phosphoenolpyruvate pocket. Glu-314 serves as the catalytic Proton acceptor. Residues Arg-347, Arg-388, and Lys-413 each contribute to the phosphoenolpyruvate site.

It belongs to the EPSP synthase family. As to quaternary structure, monomer.

It localises to the cytoplasm. The enzyme catalyses 3-phosphoshikimate + phosphoenolpyruvate = 5-O-(1-carboxyvinyl)-3-phosphoshikimate + phosphate. It participates in metabolic intermediate biosynthesis; chorismate biosynthesis; chorismate from D-erythrose 4-phosphate and phosphoenolpyruvate: step 6/7. In terms of biological role, catalyzes the transfer of the enolpyruvyl moiety of phosphoenolpyruvate (PEP) to the 5-hydroxyl of shikimate-3-phosphate (S3P) to produce enolpyruvyl shikimate-3-phosphate and inorganic phosphate. The chain is 3-phosphoshikimate 1-carboxyvinyltransferase from Mycobacterium ulcerans (strain Agy99).